A 648-amino-acid chain; its full sequence is MVKVTDIVLWDKPGEKVLLLGNQAIVRGALEGNIGVYAAYPGTPSSEITDTMAMVAKKAGVYMEYSTNEKVAFETALSASWAGLRAMTAMKHVGLNVAMDSFMTVSYMGINGGLIVVVADDPSMWSSQNEQDTRAIAKFANIPVLEPSSVQEAKDMVKYAFEISEKYGQMVILRTTTRSSHMRGDVVLGELPQEIKEGKRKFGNFKKNPEKYVDIPAFQRPKHPWLLETIEKFREEFNTSPFNWIEGPEDAKVGIIAPGLSYAYVKEALAWLGIDNVKILKLGTPFPVPYGLLEKFFNGLERVLIVEELEPVVEEQVKVWAFDNNINIEIHGKDLVPRVYEMTTRRAVEAVAKFLGVETPINFQEIDEKYKKVQEMVPPRPPSLCPACPHRNTFFAIRKAATPRAIFPSDIGCYTLGVLPPLKTVDTTIAMGGSIGVAHGLSIALNGALGEEQRKTGKEKKIIVATIGDSTFFHTGLPALANAIYNRSNVLIVVMDNMVTAMTGDQPNPGTGETPHGPGKRILIEEVARAMGADFVAVVDPYDIKETYETIKKALEVEGVSVVVSRRACALYRIGQLRREGKQWPIYQVNEEKCTGCKICINAYGCPAIYWDAEKKKARVDPLMCWGCGGCAQVCPFGAFEKVREGEL.

4Fe-4S ferredoxin-type domains are found at residues 585–614 and 616–645; these read PIYQ…WDAE and KKAR…KVRE. Positions 594, 597, 600, 606, 625, 628, 631, and 635 each coordinate [4Fe-4S] cluster.

In terms of assembly, heterodimer of the IorA and IorB subunits. The cofactor is [4Fe-4S] cluster.

It carries out the reaction indole-3-pyruvate + 2 oxidized [2Fe-2S]-[ferredoxin] + CoA = (indol-3-yl)acetyl-CoA + 2 reduced [2Fe-2S]-[ferredoxin] + CO2 + H(+). Functionally, catalyzes the ferredoxin-dependent oxidative decarboxylation of arylpyruvates. This Pyrococcus horikoshii (strain ATCC 700860 / DSM 12428 / JCM 9974 / NBRC 100139 / OT-3) protein is Indolepyruvate oxidoreductase subunit IorA (iorA).